Consider the following 400-residue polypeptide: Subtilisin-like protease 7 (400 aa).

Positions 1 to 20 (MGFITKAIPLALAAASVING) are cleaved as a signal peptide. A propeptide spanning residues 21–119 (AEILETRAGV…IERDARVQIN (99 aa)) is cleaved from the precursor. The 83-residue stretch at 36–118 (KYIVVMNDGI…YIERDARVQI (83 aa)) folds into the Inhibitor I9 domain. The region spanning 129 to 400 (SWGLARVGSK…SKLINNGSGM (272 aa)) is the Peptidase S8 domain. Residues D161 and H192 each act as charge relay system in the active site. N-linked (GlcNAc...) asparagine glycosylation is found at N222 and N252. S346 serves as the catalytic Charge relay system. N396 carries an N-linked (GlcNAc...) asparagine glycan.

This sequence belongs to the peptidase S8 family.

The protein localises to the secreted. In terms of biological role, secreted subtilisin-like serine protease with keratinolytic activity that contributes to pathogenicity. The sequence is that of Subtilisin-like protease 7 (SUB7) from Trichophyton soudanense.